We begin with the raw amino-acid sequence, 152 residues long: Cell division protein SepF (152 aa).

Positions 23–32 are enriched in basic and acidic residues; it reads EVAREPEPMQ. The interval 23 to 42 is disordered; the sequence is EVAREPEPMQKKTKKEKPSK.

The protein belongs to the SepF family. As to quaternary structure, homodimer. Interacts with FtsZ.

It localises to the cytoplasm. Functionally, cell division protein that is part of the divisome complex and is recruited early to the Z-ring. Probably stimulates Z-ring formation, perhaps through the cross-linking of FtsZ protofilaments. Its function overlaps with FtsA. The protein is Cell division protein SepF of Listeria welshimeri serovar 6b (strain ATCC 35897 / DSM 20650 / CCUG 15529 / CIP 8149 / NCTC 11857 / SLCC 5334 / V8).